A 397-amino-acid chain; its full sequence is Probable tRNA sulfurtransferase (397 aa).

In terms of domain architecture, THUMP spans 60 to 165 (HPVIEKLQEV…KEGTYITAYD (106 aa)). ATP is bound by residues 183-184 (ML), 208-209 (HF), Arg-265, Gly-287, and Gln-296.

The protein belongs to the ThiI family.

It is found in the cytoplasm. It catalyses the reaction [ThiI sulfur-carrier protein]-S-sulfanyl-L-cysteine + a uridine in tRNA + 2 reduced [2Fe-2S]-[ferredoxin] + ATP + H(+) = [ThiI sulfur-carrier protein]-L-cysteine + a 4-thiouridine in tRNA + 2 oxidized [2Fe-2S]-[ferredoxin] + AMP + diphosphate. The enzyme catalyses [ThiS sulfur-carrier protein]-C-terminal Gly-Gly-AMP + S-sulfanyl-L-cysteinyl-[cysteine desulfurase] + AH2 = [ThiS sulfur-carrier protein]-C-terminal-Gly-aminoethanethioate + L-cysteinyl-[cysteine desulfurase] + A + AMP + 2 H(+). It functions in the pathway cofactor biosynthesis; thiamine diphosphate biosynthesis. Catalyzes the ATP-dependent transfer of a sulfur to tRNA to produce 4-thiouridine in position 8 of tRNAs, which functions as a near-UV photosensor. Also catalyzes the transfer of sulfur to the sulfur carrier protein ThiS, forming ThiS-thiocarboxylate. This is a step in the synthesis of thiazole, in the thiamine biosynthesis pathway. The sulfur is donated as persulfide by IscS. In Anoxybacillus flavithermus (strain DSM 21510 / WK1), this protein is Probable tRNA sulfurtransferase.